We begin with the raw amino-acid sequence, 144 residues long: Universal stress protein F (144 aa).

The protein belongs to the universal stress protein A family. Homodimer.

In Salmonella typhi, this protein is Universal stress protein F (uspF).